The chain runs to 220 residues: Ribose-5-phosphate isomerase A (220 aa).

Substrate is bound by residues 28-31 (TGST), 81-84 (DGAD), and 94-97 (KGGG). Residue Glu-103 is the Proton acceptor of the active site. Lys-121 contributes to the substrate binding site.

Belongs to the ribose 5-phosphate isomerase family. As to quaternary structure, homodimer.

It carries out the reaction aldehydo-D-ribose 5-phosphate = D-ribulose 5-phosphate. Its pathway is carbohydrate degradation; pentose phosphate pathway; D-ribose 5-phosphate from D-ribulose 5-phosphate (non-oxidative stage): step 1/1. Catalyzes the reversible conversion of ribose-5-phosphate to ribulose 5-phosphate. The chain is Ribose-5-phosphate isomerase A from Leptothrix cholodnii (strain ATCC 51168 / LMG 8142 / SP-6) (Leptothrix discophora (strain SP-6)).